A 256-amino-acid polypeptide reads, in one-letter code: Protein crossbronx-like (256 aa).

In terms of domain architecture, UBC core spans 17–179 (NQGYQVLAEY…AKASIVWSWK (163 aa)).

Belongs to the ubiquitin-conjugating enzyme family. FTS subfamily.

The chain is Protein crossbronx-like from Drosophila mojavensis (Fruit fly).